A 251-amino-acid chain; its full sequence is Phosphate import ATP-binding protein PstB 2 (251 aa).

Residues 5–246 (ITTKDVHLYY…PDKEQTADYL (242 aa)) enclose the ABC transporter domain. An ATP-binding site is contributed by 37–44 (GPSGCGKS).

The protein belongs to the ABC transporter superfamily. Phosphate importer (TC 3.A.1.7) family. As to quaternary structure, the complex is composed of two ATP-binding proteins (PstB), two transmembrane proteins (PstC and PstA) and a solute-binding protein (PstS).

The protein resides in the cell membrane. The catalysed reaction is phosphate(out) + ATP + H2O = ADP + 2 phosphate(in) + H(+). Its function is as follows. Part of the ABC transporter complex PstSACB involved in phosphate import. Responsible for energy coupling to the transport system. This Ligilactobacillus salivarius (strain UCC118) (Lactobacillus salivarius) protein is Phosphate import ATP-binding protein PstB 2.